Consider the following 204-residue polypeptide: Small ribosomal subunit protein uS4 (204 aa).

The 63-residue stretch at 95–157 folds into the S4 RNA-binding domain; it reads RRLDNTVFRM…KGIHSIIRHN (63 aa).

This sequence belongs to the universal ribosomal protein uS4 family. In terms of assembly, part of the 30S ribosomal subunit. Contacts protein S5. The interaction surface between S4 and S5 is involved in control of translational fidelity.

Its function is as follows. One of the primary rRNA binding proteins, it binds directly to 16S rRNA where it nucleates assembly of the body of the 30S subunit. In terms of biological role, with S5 and S12 plays an important role in translational accuracy. The polypeptide is Small ribosomal subunit protein uS4 (Treponema pallidum (strain Nichols)).